The following is a 430-amino-acid chain: CinA-like protein (430 aa).

This sequence belongs to the CinA family.

This is CinA-like protein from Mycobacterium tuberculosis (strain ATCC 25177 / H37Ra).